The chain runs to 100 residues: MSKKSIIEREKKRKSLVKKYKNLRNFIKKEIKNELNFFEKIFLNFKLQKFPRDSSPCRLHNRCYLTGRPRGYYRFFGLSRHIFRDMAHYGLLPGVTKSSW.

The protein belongs to the universal ribosomal protein uS14 family. Part of the 30S ribosomal subunit.

Its subcellular location is the plastid. In terms of biological role, binds 16S rRNA, required for the assembly of 30S particles. This Euglena longa (Euglenophycean alga) protein is Small ribosomal subunit protein uS14c.